We begin with the raw amino-acid sequence, 483 residues long: Regulatory protein ViaA (483 aa).

The protein belongs to the ViaA family. As to quaternary structure, homodimer. Interacts with RavA.

It is found in the cytoplasm. Its function is as follows. Component of the RavA-ViaA chaperone complex, which may act on the membrane to optimize the function of some of the respiratory chains. ViaA stimulates the ATPase activity of RavA. In Salmonella agona (strain SL483), this protein is Regulatory protein ViaA.